Here is a 379-residue protein sequence, read N- to C-terminus: Alanine racemase (379 aa).

Residue Lys-40 is the Proton acceptor; specific for D-alanine of the active site. Position 40 is an N6-(pyridoxal phosphate)lysine (Lys-40). Arg-138 contributes to the substrate binding site. The active-site Proton acceptor; specific for L-alanine is the Tyr-267. Met-315 serves as a coordination point for substrate.

The protein belongs to the alanine racemase family. Requires pyridoxal 5'-phosphate as cofactor.

It carries out the reaction L-alanine = D-alanine. Its pathway is amino-acid biosynthesis; D-alanine biosynthesis; D-alanine from L-alanine: step 1/1. Functionally, catalyzes the interconversion of L-alanine and D-alanine. May also act on other amino acids. This Halothermothrix orenii (strain H 168 / OCM 544 / DSM 9562) protein is Alanine racemase (alr).